Consider the following 157-residue polypeptide: Rieske domain-containing protein (157 aa).

At Met1 the chain carries N-acetylmethionine. Ser6 carries the post-translational modification Phosphoserine. 2 consecutive Rieske domains span residues 16–127 (TSVC…VDNG) and 17–131 (SVCV…NIYV). [2Fe-2S] cluster contacts are provided by Cys57, His59, Cys80, and His83.

It depends on [2Fe-2S] cluster as a cofactor.

In Mus musculus (Mouse), this protein is Rieske domain-containing protein (Rfesd).